A 304-amino-acid chain; its full sequence is Non-structural maintenance of chromosomes element 3 homolog (304 aa).

Disordered stretches follow at residues 1-82 (MLQK…PRSQ) and 285-304 (ALAD…APSS). A compositionally biased stretch (basic and acidic residues) spans 32–43 (AGEDARVLRDGF). 3 positions are modified to phosphoserine: Ser57, Ser60, and Ser64. Positions 60–80 (SQGPSPQGARRAQAAPAVGPR) are enriched in low complexity. The segment at 78-304 (GPRSQKQLEL…PQPSGPAPSS (227 aa)) is interaction with NSMCE1. One can recognise an MAGE domain in the interval 85-285 (LELKVSELVQ…KDWPAQYCEA (201 aa)).

As to quaternary structure, component of the SMC5-SMC6 complex which consists at least of SMC5, SMC6, NSMCE2, NSMCE1, NSMCE4A or EID3 and NSMCE3. NSMCE1, NSMCE4A or EID3 and NSMCE3 probably form a subcomplex that bridges the head domains of the SMC5:SMC6 heterodimer. Interacts with PJA1. Interacts with E2F1 (via C-terminus). Interacts with NGFR (via C-terminus). Interacts with NSMCE1. Interacts with NSMCE4. Interacts with SMC6. Interacts with EID3. As to expression, ubiquitous.

The protein localises to the cytoplasm. Its subcellular location is the nucleus. The protein resides in the chromosome. It is found in the telomere. Component of the SMC5-SMC6 complex, a complex involved in repair of DNA double-strand breaks by homologous recombination. The complex may promote sister chromatid homologous recombination by recruiting the SMC1-SMC3 cohesin complex to double-strand breaks. The complex is required for telomere maintenance via recombination in ALT (alternative lengthening of telomeres) cell lines and mediates sumoylation of shelterin complex (telosome) components which is proposed to lead to shelterin complex disassembly in ALT-associated PML bodies (APBs). In vitro enhances ubiquitin ligase activity of NSMCE1. Proposed to act through recruitment and/or stabilization of the Ubl-conjugating enzyme (E2) at the E3:substrate complex. May be a growth suppressor that facilitates the entry of the cell into cell cycle arrest. In Homo sapiens (Human), this protein is Non-structural maintenance of chromosomes element 3 homolog.